A 184-amino-acid chain; its full sequence is Photosystem I assembly protein Ycf4 (184 aa).

A run of 2 helical transmembrane segments spans residues 21–43 and 68–90; these read NFCW…ISSY and FYGI…NVGS.

It belongs to the Ycf4 family.

It localises to the plastid. Its subcellular location is the chloroplast thylakoid membrane. Seems to be required for the assembly of the photosystem I complex. In Physcomitrium patens (Spreading-leaved earth moss), this protein is Photosystem I assembly protein Ycf4.